Here is an 87-residue protein sequence, read N- to C-terminus: UPF0335 protein RHECIAT_CH0003797 (87 aa).

The protein belongs to the UPF0335 family.

This chain is UPF0335 protein RHECIAT_CH0003797, found in Rhizobium etli (strain CIAT 652).